The chain runs to 375 residues: Queuine tRNA-ribosyltransferase (375 aa).

Catalysis depends on aspartate 93, which acts as the Proton acceptor. Residues 93–97 (DSGGF), aspartate 147, glutamine 191, and glycine 218 each bind substrate. The tract at residues 249–255 (GVGTPLD) is RNA binding. Aspartate 268 serves as the catalytic Nucleophile. Residues 273–277 (TRNAR) form an RNA binding; important for wobble base 34 recognition region. The Zn(2+) site is built by cysteine 306, cysteine 308, cysteine 311, and histidine 337.

This sequence belongs to the queuine tRNA-ribosyltransferase family. Homodimer. Within each dimer, one monomer is responsible for RNA recognition and catalysis, while the other monomer binds to the replacement base PreQ1. Requires Zn(2+) as cofactor.

The catalysed reaction is 7-aminomethyl-7-carbaguanine + guanosine(34) in tRNA = 7-aminomethyl-7-carbaguanosine(34) in tRNA + guanine. It functions in the pathway tRNA modification; tRNA-queuosine biosynthesis. Its function is as follows. Catalyzes the base-exchange of a guanine (G) residue with the queuine precursor 7-aminomethyl-7-deazaguanine (PreQ1) at position 34 (anticodon wobble position) in tRNAs with GU(N) anticodons (tRNA-Asp, -Asn, -His and -Tyr). Catalysis occurs through a double-displacement mechanism. The nucleophile active site attacks the C1' of nucleotide 34 to detach the guanine base from the RNA, forming a covalent enzyme-RNA intermediate. The proton acceptor active site deprotonates the incoming PreQ1, allowing a nucleophilic attack on the C1' of the ribose to form the product. After dissociation, two additional enzymatic reactions on the tRNA convert PreQ1 to queuine (Q), resulting in the hypermodified nucleoside queuosine (7-(((4,5-cis-dihydroxy-2-cyclopenten-1-yl)amino)methyl)-7-deazaguanosine). This is Queuine tRNA-ribosyltransferase from Nitratidesulfovibrio vulgaris (strain DP4) (Desulfovibrio vulgaris).